The sequence spans 88 residues: Large ribosomal subunit protein bL27 (88 aa).

Residues 1–21 form a disordered region; sequence MAHKKGQGSTQNNRDSAGRRL.

This sequence belongs to the bacterial ribosomal protein bL27 family.

This chain is Large ribosomal subunit protein bL27, found in Helicobacter pylori (strain P12).